The primary structure comprises 225 residues: Ribonuclease 3 (225 aa).

An RNase III domain is found at 5-127 (LERLQRQIGY…IIGAISLDSD (123 aa)). Glu40 contributes to the Mg(2+) binding site. Asp44 is a catalytic residue. Residues Asp113 and Glu116 each contribute to the Mg(2+) site. Glu116 is an active-site residue. The region spanning 154 to 224 (DPKTRLQEYL…AEKILQLLEM (71 aa)) is the DRBM domain.

This sequence belongs to the ribonuclease III family. Homodimer. Mg(2+) serves as cofactor.

It is found in the cytoplasm. The catalysed reaction is Endonucleolytic cleavage to 5'-phosphomonoester.. Digests double-stranded RNA. Involved in the processing of primary rRNA transcript to yield the immediate precursors to the large and small rRNAs (23S and 16S). Also processes some mRNAs, and tRNAs when they are encoded in the rRNA operon. In terms of biological role, CRISPR (clustered regularly interspaced short palindromic repeat) is an adaptive immune system that provides protection against mobile genetic elements (viruses, transposable elements and conjugative plasmids). CRISPR clusters contain spacers, sequences complementary to antecedent mobile elements, and target invading nucleic acids. CRISPR clusters are transcribed and processed into CRISPR RNA (crRNA). In this organism endogenous ribonuclease 3 and Cas9 are required for correct coprocessing of pre-crRNA and the trans-encoded small RNA (tracrRNA). Cas9, crRNA and tracrRNA are required for cleavage of invading DNA. Complements pre-crRNA and tracrRNA coprocessing defects in an rnc deletion in S.pyogenes strain 370. The protein is Ribonuclease 3 of Pasteurella multocida (strain Pm70).